Consider the following 200-residue polypeptide: Glycerol-3-phosphate acyltransferase (200 aa).

5 helical membrane-spanning segments follow: residues 2-22 (FNIP…AVIV), 51-71 (KAAV…VLLA), 84-104 (AIAA…FFGF), 114-134 (LGVL…IWLV), and 159-179 (FFMP…LVLF).

It belongs to the PlsY family. In terms of assembly, probably interacts with PlsX.

The protein localises to the cell inner membrane. The enzyme catalyses an acyl phosphate + sn-glycerol 3-phosphate = a 1-acyl-sn-glycero-3-phosphate + phosphate. It functions in the pathway lipid metabolism; phospholipid metabolism. Catalyzes the transfer of an acyl group from acyl-phosphate (acyl-PO(4)) to glycerol-3-phosphate (G3P) to form lysophosphatidic acid (LPA). This enzyme utilizes acyl-phosphate as fatty acyl donor, but not acyl-CoA or acyl-ACP. This Neisseria meningitidis serogroup C / serotype 2a (strain ATCC 700532 / DSM 15464 / FAM18) protein is Glycerol-3-phosphate acyltransferase.